Consider the following 348-residue polypeptide: 3'-dehydrocarminate deglycosidase alpha subunit (348 aa).

Glutamate 145 contacts Mg(2+). Catalysis depends on histidine 147, which acts as the Proton acceptor. Residues aspartate 177, histidine 275, and glutamate 311 each contribute to the Mg(2+) site.

This sequence belongs to the C-glycoside deglycosidase alpha subunit family. In terms of assembly, heterodimer composed of an alpha subunit (CarB) and a beta subunit (CarC). Mg(2+) serves as cofactor.

The enzyme catalyses 3'-dehydrocarminate + H(+) = kermesate + 1,5-anhydro-D-erythro-hex-1-en-3-ulose. With respect to regulation, activity is strongly reduced in the presence of chelating agents. In terms of biological role, carbon-carbon bond-cleaving enzyme which participates in a carminate degradation pathway. Cleaves the C-C bond in 3'-dehydrocarminate to form kermesate. Also shows weak activity with other C-glycosides, such as 3''-dehydropuerarin (3''-oxo-puerarin), 3''-dehydroisoorientin (3''-oxo-homoorientin) and 3'-dehydromangiferin (3'-oxo-mangiferin). This Microbacterium sp protein is 3'-dehydrocarminate deglycosidase alpha subunit.